We begin with the raw amino-acid sequence, 54 residues long: Rubredoxin-1 (54 aa).

The Rubredoxin-like domain maps to 1 to 52; the sequence is MKKWECVVCGFIYDEAEGLPDEGIEPGTAWNNVPEDWVCPDCGVGKDDFEMV. Residues Cys6, Cys9, Cys39, and Cys42 each contribute to the Fe cation site.

This sequence belongs to the rubredoxin family. It depends on Fe(3+) as a cofactor.

Its subcellular location is the cytoplasm. It functions in the pathway hydrocarbon metabolism; alkane degradation. Its function is as follows. Involved in the hydrocarbon hydroxylating system, which transfers electrons from NADH to rubredoxin reductase and then through rubredoxin to alkane 1 monooxygenase. This is Rubredoxin-1 (rubA) from Alcanivorax borkumensis (strain ATCC 700651 / DSM 11573 / NCIMB 13689 / SK2).